Reading from the N-terminus, the 315-residue chain is Probable cell division protein WhiA (315 aa).

Positions 275–309 form a DNA-binding region, H-T-H motif; the sequence is NLKELGEMVPSGVVSKSGINHRLRKINEIADKIRE.

It belongs to the WhiA family.

Functionally, involved in cell division and chromosome segregation. The polypeptide is Probable cell division protein WhiA (Brevibacillus brevis (strain 47 / JCM 6285 / NBRC 100599)).